Here is a 437-residue protein sequence, read N- to C-terminus: MNDSLSRLPREPADRLTKPFMRFLRIEATAGIILLLSTLLALGLANTAWSSSFLAFWEMPAGVRLGDIGIYRSLKHWINDGLMTFFFFVIALELKRELVLGELRNPRMAALPVAAALGGMAAPAGIYLLLVGGGPGASGWGTVMSTDTAFVIGCLALLGSRVPGSLRLFLLSLAIFDDIGAILIVAVGYGEPLNWVALGTGGLGFAFVAGIALLGIRSIPVYFAMGSAIWLAFDASGVHATLVGVILGLMTPARRWVSEIRLHAILDRVIAHPPGDHRSRDTAARSDLHRAGVATREAVSPIERLEIALHPWVAFAIMPLFAVSNAGIPIEDANFDVPLTIAIVVAFVVGKPAGIVLFSFLAVKLRLASRPEQLSWSLLAAGSLLTGIGFTMALFIAELAFEPELLIPVKLGVLGASVISAALGFMALTLLTSPNRR.

Helical transmembrane passes span 29 to 49 (TAGIILLLSTLLALGLANTAW), 74 to 94 (LKHWINDGLMTFFFFVIALEL), 111 to 131 (LPVAAALGGMAAPAGIYLLLV), 139 to 159 (GWGTVMSTDTAFVIGCLALLG), 168 to 188 (LFLLSLAIFDDIGAILIVAVG), 196 to 216 (VALGTGGLGFAFVAGIALLGI), 229 to 249 (IWLAFDASGVHATLVGVILGL), 307 to 327 (IALHPWVAFAIMPLFAVSNAG), 341 to 361 (IAIVVAFVVGKPAGIVLFSFL), 376 to 396 (WSLLAAGSLLTGIGFTMALFI), and 411 to 431 (LGVLGASVISAALGFMALTLL).

The protein belongs to the NhaA Na(+)/H(+) (TC 2.A.33) antiporter family.

Its subcellular location is the cell inner membrane. The catalysed reaction is Na(+)(in) + 2 H(+)(out) = Na(+)(out) + 2 H(+)(in). In terms of biological role, na(+)/H(+) antiporter that extrudes sodium in exchange for external protons. The polypeptide is Na(+)/H(+) antiporter NhaA (Rhizobium meliloti (strain 1021) (Ensifer meliloti)).